Reading from the N-terminus, the 347-residue chain is Protein RecA (347 aa).

65 to 72 (GPESSGKT) contacts ATP. A disordered region spans residues 325-347 (KLGISDGDVEETEDAPKSLFDEE). The segment covering 338–347 (DAPKSLFDEE) has biased composition (basic and acidic residues).

This sequence belongs to the RecA family.

It is found in the cytoplasm. Its function is as follows. Can catalyze the hydrolysis of ATP in the presence of single-stranded DNA, the ATP-dependent uptake of single-stranded DNA by duplex DNA, and the ATP-dependent hybridization of homologous single-stranded DNAs. It interacts with LexA causing its activation and leading to its autocatalytic cleavage. This chain is Protein RecA, found in Staphylococcus aureus (strain Mu3 / ATCC 700698).